Consider the following 71-residue polypeptide: Cell division protein FtsB (71 aa).

Residues 1-3 are Cytoplasmic-facing; the sequence is MKI. The helical transmembrane segment at 4–21 threads the bilayer; it reads LKIFLLSLLFWLQYSLWF. Topologically, residues 22 to 71 are extracellular; sequence GKNGVLDFIKIYRRVTIEKKNNEYLDMRNNQIILEIENFNNHINKDKKKT.

It belongs to the FtsB family.

It localises to the cell membrane. In terms of biological role, essential cell division protein. May link together the upstream cell division proteins, which are predominantly cytoplasmic, with the downstream cell division proteins, which are predominantly extracellular. This is Cell division protein FtsB from Buchnera aphidicola subsp. Acyrthosiphon pisum (strain APS) (Acyrthosiphon pisum symbiotic bacterium).